The primary structure comprises 762 residues: Protein PHTF1 (762 aa).

Residues 6-150 (RDAISWYQKK…VHCQIVSTQI (145 aa)) form the PHTF domain. Transmembrane regions (helical) follow at residues 77–97 (GLVR…VTSL), 99–119 (IFVW…LYLM), and 121–141 (PIVN…MGTV). A disordered region spans residues 152–184 (RPSGNNGNRRRRKLRKTVNGDGSRENGNNSSDK). N179 and N180 each carry an N-linked (GlcNAc...) asparagine glycan. Phosphoserine occurs at positions 272, 276, 277, 334, and 336. Disordered regions lie at residues 344-380 (SAAF…ETED) and 393-415 (RSSV…TKRD). Low complexity predominate over residues 348–361 (SQGSRSGVSGGSRS). The N-linked (GlcNAc...) asparagine glycan is linked to N363. The segment covering 365-376 (SRRDSESTRHDS) has biased composition (basic and acidic residues). N-linked (GlcNAc...) asparagine glycosylation is present at N431. The next 4 helical transmembrane spans lie at 473–493 (GVGY…FPFL), 512–532 (EILT…LSII), 611–631 (VVVS…CAQV), and 645–665 (WEFL…ASLG). N-linked (GlcNAc...) asparagine glycosylation is found at N674 and N733. A helical membrane pass occupies residues 737–757 (VVILSAVSGVISDLLGFNIRL).

Interacts with FEM1B. In terms of tissue distribution, widely expressed with highest levels in testis.

The protein localises to the endoplasmic reticulum membrane. The protein resides in the golgi apparatus. It localises to the cis-Golgi network membrane. In Homo sapiens (Human), this protein is Protein PHTF1.